Reading from the N-terminus, the 102-residue chain is Small ribosomal subunit protein uS10 (102 aa).

It belongs to the universal ribosomal protein uS10 family. In terms of assembly, part of the 30S ribosomal subunit.

In terms of biological role, involved in the binding of tRNA to the ribosomes. The sequence is that of Small ribosomal subunit protein uS10 from Pseudothermotoga lettingae (strain ATCC BAA-301 / DSM 14385 / NBRC 107922 / TMO) (Thermotoga lettingae).